Reading from the N-terminus, the 769-residue chain is CO(2)-response secreted protease (769 aa).

The N-terminal stretch at 1–27 (MKGITFFTPFLSFLYLLCILFMTETEA) is a signal peptide. An Inhibitor I9 domain is found at 35–108 (VYIVYMGSAS…VFPDPHFQLH (74 aa)). Residues 112–613 (SWDFLKYQTS…AGELSSTASM (502 aa)) form the Peptidase S8 domain. Residues D145 and H210 each act as charge relay system in the active site. The PA domain maps to 381 to 465 (ADASEGSARA…SKEAAEIFSY (85 aa)). S546 (charge relay system) is an active-site residue.

This sequence belongs to the peptidase S8 family. As to expression, expressed in roots, guard cells and meristemoid and pavement cells.

The protein resides in the secreted. Its subcellular location is the cell wall. The enzyme catalyses Release of an N-terminal tripeptide from a polypeptide.. Functionally, mediates CO(2)-controlled stomatal development by cleaving peptide EPF2 (AC Q8LC53). Not active on peptides EPF1 (AC Q8S8I4) or stomagen (AC Q9SV72). The protein is CO(2)-response secreted protease of Arabidopsis thaliana (Mouse-ear cress).